A 198-amino-acid polypeptide reads, in one-letter code: Translation machinery-associated protein 22 (198 aa).

Residues 99–170 (VIIKREARTK…EVETYIHSLL (72 aa)) form the SUI1 domain.

This sequence belongs to the DENR family. As to quaternary structure, interacts with the 40S ribosomal subunit.

The protein resides in the cytoplasm. This is Translation machinery-associated protein 22 (TMA22) from Saccharomyces cerevisiae (strain YJM789) (Baker's yeast).